The sequence spans 568 residues: Zinc finger protein 76 (568 aa).

A Glycyl lysine isopeptide (Lys-Gly) (interchain with G-Cter in SUMO2) cross-link involves residue lysine 24. 3 tandem repeats follow at residues 34 to 45 (IQLEDGTTAYIH), 62 to 73 (VQLEDGSMAYIH), and 88 to 99 (VQLEDGSTAYIH). The 3 X 12 AA approximate repeats stretch occupies residues 34-99 (IQLEDGTTAY…LEDGSTAYIH (66 aa)). 7 consecutive C2H2-type zinc fingers follow at residues 165–189 (FRCG…ERAH), 195–219 (YRCD…VRTH), 225–249 (YKCP…VRTH), 255–279 (FRCP…VRTH), 285–309 (YTCP…VRIH), 315–339 (YVCT…HVVH), and 345–368 (YTCS…RSAH). The tract at residues 365–401 (RSAHGELEATEESEQALYEQQQLEAASAAEESPSPKP) is disordered. Residues 379–396 (QALYEQQQLEAASAAEES) show a composition bias toward low complexity.

Belongs to the krueppel C2H2-type zinc-finger protein family.

The protein localises to the nucleus. In terms of biological role, may be involved in transcriptional regulation. This is Zinc finger protein 76 (Znf76) from Rattus norvegicus (Rat).